Here is a 392-residue protein sequence, read N- to C-terminus: MNTPTTGSHPARYPSAAAGEPTLDSWQEPPHNRWAFAHLGEMVPSAAVSRRPVNAPGHALARLGAIAAQLPDLEQRLEQTYTDAFLVLRGTEVVAEYYRAGFAPDDRHLLMSVSKSLCGTVVGALVDEGRIDPAQPVTEYVPELAGSVYDGPSVLQVLDMQISIDYNEDYVDPASEVQTHGRSAGWRTRATGDPADTYEFLTTLRGDGSTGEFQYCSANTDVLAWIVERVTGLRYVEALSTYLWAKLDADRDATITVDTTGFGFAHGGVSCTARDLARVGRMMLDGGVAPGGRVVSEDWVRRVLAGGSHEAMTDKGFTNTFPDGSYTRQWWCTGNERGNVSGIGIHGQNLWLDPLTDSVIVKLSSWPDPDTEHWHRLQNGILLDVSRALDAV.

The tract at residues 1 to 27 (MNTPTTGSHPARYPSAAAGEPTLDSWQ) is disordered. Ser112 is an active-site residue.

It catalyses the reaction [N-(6-aminohexanoyl)](n) + H2O = [N-(6-aminohexanoyl)](n-1) + 6-aminohexanoate. It carries out the reaction N-(6-aminohexanoyl)-6-aminohexanoate + H2O = 2 6-aminohexanoate. It functions in the pathway xenobiotic degradation; nylon-6 oligomer degradation. Functionally, involved in nylon oligomer degradation. The polypeptide is 6-aminohexanoate-dimer hydrolase (Paenarthrobacter ureafaciens).